The chain runs to 326 residues: Iron-sulfur cluster assembly SufBD family protein PH0883 (326 aa).

The protein belongs to the iron-sulfur cluster assembly SufBD family.

This Pyrococcus horikoshii (strain ATCC 700860 / DSM 12428 / JCM 9974 / NBRC 100139 / OT-3) protein is Iron-sulfur cluster assembly SufBD family protein PH0883.